A 212-amino-acid polypeptide reads, in one-letter code: Pyridoxine/pyridoxamine 5'-phosphate oxidase (212 aa).

Residues 8-11 (RREY) and K66 each bind substrate. FMN-binding positions include 61-66 (RIVLLK), 76-77 (FT), R82, K83, and Q105. Substrate-binding residues include Y123, R127, and S131. FMN contacts are provided by residues 140–141 (QS) and W185. 191 to 193 (RLH) is a binding site for substrate. Residue R195 participates in FMN binding.

It belongs to the pyridoxamine 5'-phosphate oxidase family. Homodimer. It depends on FMN as a cofactor.

The catalysed reaction is pyridoxamine 5'-phosphate + O2 + H2O = pyridoxal 5'-phosphate + H2O2 + NH4(+). It carries out the reaction pyridoxine 5'-phosphate + O2 = pyridoxal 5'-phosphate + H2O2. Its pathway is cofactor metabolism; pyridoxal 5'-phosphate salvage; pyridoxal 5'-phosphate from pyridoxamine 5'-phosphate: step 1/1. It functions in the pathway cofactor metabolism; pyridoxal 5'-phosphate salvage; pyridoxal 5'-phosphate from pyridoxine 5'-phosphate: step 1/1. Catalyzes the oxidation of either pyridoxine 5'-phosphate (PNP) or pyridoxamine 5'-phosphate (PMP) into pyridoxal 5'-phosphate (PLP). This Shewanella sp. (strain W3-18-1) protein is Pyridoxine/pyridoxamine 5'-phosphate oxidase.